The sequence spans 569 residues: Dicarboxylate transporter 1, chloroplastic (569 aa).

Residues 1 to 93 (MASMALSLTS…VPSPAPVSAP (93 aa)) constitute a chloroplast transit peptide. The segment covering 23–74 (SLKPLSKSQPSISLPSLRSNASKSPSLSHKHFLSPPSLLLPHKLKPISASSP) has biased composition (low complexity). The disordered stretch occupies residues 23–93 (SLKPLSKSQP…VPSPAPVSAP (71 aa)). Over residues 75 to 90 (TNPPPPPAPVPSPAPV) the composition is skewed to pro residues. Helical transmembrane passes span 106-126 (PLLA…PEGV), 134-154 (LAIF…LGAV), 172-192 (AAFS…FFFA), 241-261 (AGGI…SNVG), 268-288 (LGAW…SMFL), 317-337 (AAFV…YVVY), 367-387 (IMAV…KLGV), 388-408 (DAVT…VVTW), 423-443 (WFAA…ITWF), 450-470 (VVGG…LLYF), 490-510 (FLSV…VLSF), and 543-563 (YGFL…GLWW).

This sequence belongs to the SLC13A/DASS transporter (TC 2.A.47) family. DIT1 subfamily. In terms of assembly, monomer. In terms of processing, the N-terminus is blocked. As to expression, expressed in leaves.

The protein localises to the plastid. The protein resides in the chloroplast inner membrane. In terms of biological role, 2-oxoglutarate/malate translocator that transports carbon skeletons into chloroplasts for net glutamate synthesis. This translocator exchanges malate for internal succinate, fumarate and 2-oxoglutarate but not for aspartate and glutamate. Involved with DIT2 in primary ammonia assimilation and in the re-assimilation of ammonia generated by the photorespiratory pathway. Imports 2-oxoglutarate into plastids as precursor for ammonia assimilation. 2-oxoglutarate is converted to glutamate, the end product of ammonia assimilation, which is exported to the cytosol by DIT2. The protein is Dicarboxylate transporter 1, chloroplastic (DIT1) of Spinacia oleracea (Spinach).